The following is a 175-amino-acid chain: Co-chaperone protein HscB homolog (175 aa).

The J domain maps to 7–79 (SHFDLFHLPA…LKRATYLLSL (73 aa)).

It belongs to the HscB family. As to quaternary structure, interacts with HscA and stimulates its ATPase activity.

Its function is as follows. Co-chaperone involved in the maturation of iron-sulfur cluster-containing proteins. Seems to help targeting proteins to be folded toward HscA. The polypeptide is Co-chaperone protein HscB homolog (Burkholderia multivorans (strain ATCC 17616 / 249)).